The chain runs to 89 residues: Small ribosomal subunit protein uS15 (89 aa).

The protein belongs to the universal ribosomal protein uS15 family. As to quaternary structure, part of the 30S ribosomal subunit. Forms a bridge to the 50S subunit in the 70S ribosome, contacting the 23S rRNA.

In terms of biological role, one of the primary rRNA binding proteins, it binds directly to 16S rRNA where it helps nucleate assembly of the platform of the 30S subunit by binding and bridging several RNA helices of the 16S rRNA. Forms an intersubunit bridge (bridge B4) with the 23S rRNA of the 50S subunit in the ribosome. The chain is Small ribosomal subunit protein uS15 from Agrobacterium fabrum (strain C58 / ATCC 33970) (Agrobacterium tumefaciens (strain C58)).